A 345-amino-acid polypeptide reads, in one-letter code: MEEEKYLPELMAEKDSLDPSFVHAMRLLDEEIVKFQDSEGNKEDGEKKYLDIISNKNIKLSERVLIPVKQYPKFNFVGKLLGPRGNSLKRLQEETGAKMSILGKGSMRDKIKEEELRKSDEAKHAHLSDELHVLLEVFAPPGEAYSRMSHALEEIKKFLVPDYNDEIRQEQLRELSYLNGSDDSERGKGTRGRGIRVPSTPSRNRGGVISPAFPGRGASATRGAPITRGTISTVARGIPTPRAKAAPTTPGYRLPPPLTIETYDDYGYDDGFGEDYDEQSYDIYENNYNSQTQSVSEYYDYEHGTNEESYNHYEQEEWSKSRSTLKAPLQRPARAGYREHPYGRY.

Residues 65-131 (LIPVKQYPKF…AKHAHLSDEL (67 aa)) form the KH domain. Disordered stretches follow at residues 178–224 (LNGS…TRGA) and 321–345 (SRST…YGRY). Positions 336–345 (GYREHPYGRY) are enriched in basic and acidic residues.

This sequence belongs to the KHDRBS family.

The protein localises to the nucleus. In terms of biological role, RNA-binding protein that plays a role in the regulation of alternative splicing. The polypeptide is KH domain-containing, RNA-binding, signal transduction-associated protein 2 (khdrbs2) (Xenopus tropicalis (Western clawed frog)).